We begin with the raw amino-acid sequence, 364 residues long: Fructose-bisphosphate aldolase B (364 aa).

Ala-2 is modified (N-acetylalanine). Lys-13 carries the post-translational modification N6-succinyllysine. At Ser-36 the chain carries Phosphoserine. Residue Thr-39 is modified to Phosphothreonine. Arg-43 lines the beta-D-fructose 1,6-bisphosphate pocket. Residue Ser-89 is modified to Phosphoserine. Residue Thr-119 is modified to Phosphothreonine. Position 121 is an N6-succinyllysine (Lys-121). Ser-132 carries the phosphoserine modification. Catalysis depends on Glu-188, which acts as the Proton acceptor. Residue Lys-230 is the Schiff-base intermediate with dihydroxyacetone-P of the active site. A phosphoserine mark is found at Ser-272, Ser-276, Ser-299, and Ser-301. Beta-D-fructose 1,6-bisphosphate is bound at residue 272-274; it reads SGG. Arg-304 contributes to the beta-D-fructose 1,6-bisphosphate binding site. Ser-309 bears the Phosphoserine mark. Lys-317 bears the N6-succinyllysine mark.

This sequence belongs to the class I fructose-bisphosphate aldolase family. As to quaternary structure, homotetramer. Interacts with BBS1, BBS2, BBS4 and BBS7. Forms a ternary complex with G6PD and TP53; this interaction is direct.

It is found in the cytoplasm. Its subcellular location is the cytosol. It localises to the cytoskeleton. The protein resides in the microtubule organizing center. The protein localises to the centrosome. It is found in the centriolar satellite. The enzyme catalyses beta-D-fructose 1,6-bisphosphate = D-glyceraldehyde 3-phosphate + dihydroxyacetone phosphate. The catalysed reaction is beta-D-fructose 1-phosphate = D-glyceraldehyde + dihydroxyacetone phosphate. The protein operates within carbohydrate degradation; glycolysis; D-glyceraldehyde 3-phosphate and glycerone phosphate from D-glucose: step 4/4. It functions in the pathway carbohydrate biosynthesis; gluconeogenesis. It participates in carbohydrate metabolism; fructose metabolism. In terms of biological role, catalyzes the aldol cleavage of fructose 1,6-biphosphate to form two triosephosphates dihydroxyacetone phosphate and D-glyceraldehyde 3-phosphate in glycolysis as well as the reverse stereospecific aldol addition reaction in gluconeogenesis. In fructolysis, metabolizes fructose 1-phosphate derived from the phosphorylation of dietary fructose by fructokinase into dihydroxyacetone phosphate and D-glyceraldehyde. Acts as an adapter independently of its enzymatic activity, exerts a tumor suppressor role by stabilizing the ternary complex with G6PD and TP53 to inhibit G6PD activity and keep oxidative pentose phosphate metabolism in check. The sequence is that of Fructose-bisphosphate aldolase B (ALDOB) from Pongo abelii (Sumatran orangutan).